The primary structure comprises 128 residues: Large ribosomal subunit protein uL18 (128 aa).

Positions 1 to 36 are disordered; the sequence is MAKRSSLTRRGVSPRAAARARRHMRVRKKVRGTPER. The span at 18–31 shows a compositional bias: basic residues; it reads ARARRHMRVRKKVR.

Belongs to the universal ribosomal protein uL18 family. Part of the 50S ribosomal subunit; part of the 5S rRNA/L5/L18/L25 subcomplex. Contacts the 5S and 23S rRNAs.

This is one of the proteins that bind and probably mediate the attachment of the 5S RNA into the large ribosomal subunit, where it forms part of the central protuberance. The protein is Large ribosomal subunit protein uL18 of Thermobifida fusca (strain YX).